Reading from the N-terminus, the 457-residue chain is Endo-1,3(4)-beta-glucanase ARB_04519 (457 aa).

A signal peptide spans M1 to A18. The GH16 domain occupies T19–A319. E130 serves as the catalytic Nucleophile. Residue E135 is the Proton donor of the active site. N-linked (GlcNAc...) asparagine glycosylation occurs at N200. The disordered stretch occupies residues T318 to A397. Low complexity predominate over residues T333 to T352. The segment covering Q353–T362 has biased composition (polar residues). The span at P368–Q378 shows a compositional bias: low complexity.

This sequence belongs to the glycosyl hydrolase 16 family.

It localises to the secreted. It carries out the reaction Endohydrolysis of (1-&gt;3)- or (1-&gt;4)-linkages in beta-D-glucans when the glucose residue whose reducing group is involved in the linkage to be hydrolyzed is itself substituted at C-3.. Functionally, mixed-linked glucanase involved in the degradation of complex natural cellulosic substrates. Active on laminarin. lichenan, soluble carboxymethyl cellulose but not on pustulan. The sequence is that of Endo-1,3(4)-beta-glucanase ARB_04519 from Arthroderma benhamiae (strain ATCC MYA-4681 / CBS 112371) (Trichophyton mentagrophytes).